Here is a 275-residue protein sequence, read N- to C-terminus: Small ribosomal subunit protein uS2 (275 aa).

The disordered stretch occupies residues 232-256; sequence ARATDGKPEPEPVPGQELGADEPLA.

Belongs to the universal ribosomal protein uS2 family.

The polypeptide is Small ribosomal subunit protein uS2 (Acidothermus cellulolyticus (strain ATCC 43068 / DSM 8971 / 11B)).